A 562-amino-acid chain; its full sequence is Arginine--tRNA ligase (562 aa).

Positions 129-139 (ANPTGPLHVGH) match the 'HIGH' region motif.

It belongs to the class-I aminoacyl-tRNA synthetase family. Monomer.

Its subcellular location is the cytoplasm. The enzyme catalyses tRNA(Arg) + L-arginine + ATP = L-arginyl-tRNA(Arg) + AMP + diphosphate. This is Arginine--tRNA ligase (argS) from Xylella fastidiosa (strain 9a5c).